The chain runs to 260 residues: RxLR effector protein BLR38 (260 aa).

The N-terminal stretch at 1–18 is a signal peptide; it reads MHCTVFFLLIACAKSSYG. The RxLR signature appears at 46–49; it reads RLLR. The Nuclear localuization signal (NLS) signature appears at 136–148; it reads MPSSRKRPRALDE.

It belongs to the RxLR effector family.

The protein localises to the secreted. It localises to the host nucleus. Secreted effector that triggers a robust hypersensitive response (HR) in Lactuca serriola LS102. The response to BLN06 was visible as strong necrosis. Although effector recognition is frequently associated with single dominant R gene loci, the recognition of BLR38 requires 2 unlinked loci that display incomplete dominance. This Bremia lactucae (Lettuce downy mildew) protein is RxLR effector protein BLR38.